Here is a 279-residue protein sequence, read N- to C-terminus: 4-hydroxy-3-methylbut-2-enyl diphosphate reductase (279 aa).

Cysteine 12 serves as a coordination point for [4Fe-4S] cluster. Positions 40 and 70 each coordinate (2E)-4-hydroxy-3-methylbut-2-enyl diphosphate. Residues histidine 40 and histidine 70 each contribute to the dimethylallyl diphosphate site. Residues histidine 40 and histidine 70 each coordinate isopentenyl diphosphate. Residue cysteine 92 coordinates [4Fe-4S] cluster. A (2E)-4-hydroxy-3-methylbut-2-enyl diphosphate-binding site is contributed by histidine 119. Histidine 119 serves as a coordination point for dimethylallyl diphosphate. Histidine 119 serves as a coordination point for isopentenyl diphosphate. Glutamate 121 acts as the Proton donor in catalysis. A (2E)-4-hydroxy-3-methylbut-2-enyl diphosphate-binding site is contributed by threonine 151. Cysteine 181 is a binding site for [4Fe-4S] cluster. The (2E)-4-hydroxy-3-methylbut-2-enyl diphosphate site is built by serine 209, serine 210, asparagine 211, and serine 251. Dimethylallyl diphosphate-binding residues include serine 209, serine 210, asparagine 211, and serine 251. The isopentenyl diphosphate site is built by serine 209, serine 210, asparagine 211, and serine 251.

Belongs to the IspH family. [4Fe-4S] cluster is required as a cofactor.

It catalyses the reaction isopentenyl diphosphate + 2 oxidized [2Fe-2S]-[ferredoxin] + H2O = (2E)-4-hydroxy-3-methylbut-2-enyl diphosphate + 2 reduced [2Fe-2S]-[ferredoxin] + 2 H(+). The enzyme catalyses dimethylallyl diphosphate + 2 oxidized [2Fe-2S]-[ferredoxin] + H2O = (2E)-4-hydroxy-3-methylbut-2-enyl diphosphate + 2 reduced [2Fe-2S]-[ferredoxin] + 2 H(+). Its pathway is isoprenoid biosynthesis; dimethylallyl diphosphate biosynthesis; dimethylallyl diphosphate from (2E)-4-hydroxy-3-methylbutenyl diphosphate: step 1/1. The protein operates within isoprenoid biosynthesis; isopentenyl diphosphate biosynthesis via DXP pathway; isopentenyl diphosphate from 1-deoxy-D-xylulose 5-phosphate: step 6/6. Its function is as follows. Catalyzes the conversion of 1-hydroxy-2-methyl-2-(E)-butenyl 4-diphosphate (HMBPP) into a mixture of isopentenyl diphosphate (IPP) and dimethylallyl diphosphate (DMAPP). Acts in the terminal step of the DOXP/MEP pathway for isoprenoid precursor biosynthesis. This Thermotoga neapolitana (strain ATCC 49049 / DSM 4359 / NBRC 107923 / NS-E) protein is 4-hydroxy-3-methylbut-2-enyl diphosphate reductase.